A 207-amino-acid polypeptide reads, in one-letter code: NADH-quinone oxidoreductase subunit C (207 aa).

The protein belongs to the complex I 30 kDa subunit family. NDH-1 is composed of 14 different subunits. Subunits NuoB, C, D, E, F, and G constitute the peripheral sector of the complex.

It localises to the cell inner membrane. It carries out the reaction a quinone + NADH + 5 H(+)(in) = a quinol + NAD(+) + 4 H(+)(out). Its function is as follows. NDH-1 shuttles electrons from NADH, via FMN and iron-sulfur (Fe-S) centers, to quinones in the respiratory chain. The immediate electron acceptor for the enzyme in this species is believed to be ubiquinone. Couples the redox reaction to proton translocation (for every two electrons transferred, four hydrogen ions are translocated across the cytoplasmic membrane), and thus conserves the redox energy in a proton gradient. The sequence is that of NADH-quinone oxidoreductase subunit C from Bordetella pertussis (strain Tohama I / ATCC BAA-589 / NCTC 13251).